Reading from the N-terminus, the 131-residue chain is Small ribosomal subunit protein bS6 (131 aa).

Positions 96–131 are disordered; that stretch reads ITEASPMAKAKDERDSRRGPAGDRSYDEANAEEIAE. Basic and acidic residues predominate over residues 104 to 122; that stretch reads KAKDERDSRRGPAGDRSYD.

The protein belongs to the bacterial ribosomal protein bS6 family.

Its function is as follows. Binds together with bS18 to 16S ribosomal RNA. This chain is Small ribosomal subunit protein bS6, found in Shewanella oneidensis (strain ATCC 700550 / JCM 31522 / CIP 106686 / LMG 19005 / NCIMB 14063 / MR-1).